Reading from the N-terminus, the 610-residue chain is MVRMDLSRIRNFSIIAHVDHGKSTLADRILELTHAVSDREMREQFLDSLELERERGITIKASAVRVRYRAKDGEEYVFHLIDTPGHVDFTYEVSRALAAVEGVLLVVDASQGVEAETLAKFYMALEHGHVIIPVINKIDLPNARPLEVALEVEEVLGLPADEAIFASGKTGEGVEEILEAIVQRIPPPKGDPEAPLKALIFDSVYDAYQGVIPYLRLFEGRVRPGDRIRIYSTGKEFTVDKVGVFTPQGLVATEALEAGEVGWLVAAIRDIHDVQVGDTLTLADRPTPSPYPGFRPAKPVVFAGLYPVDSGEYGKLRDALEKLKLNDAALTFEPESSTALGFGFRCGFLGLLHAEIVQERLEREFGLSLIATAPSVVYKVRLKSGEEVEVHNPADLPDPTRIEEILEPYVKLTIFTPEEYVGSLMQLLQEKRGRLVNMNYLPGAQKRVELVYEAPFAEILYDFHDRLKSVSRGYASMDYEQIGYRPGDLVKVNVLVHGEVVDALTFIAHREKAYTMARAIVDKLAEVIPRQLFEVPIQAAIGGKIIARATVKALRKDVLAKCYGGDVTRKKKLLEKQKEGKKRLKAIGKVEVPQEAFLAVLSAGRDEPKG.

One can recognise a tr-type G domain in the interval 7–189; that stretch reads SRIRNFSIIA…AIVQRIPPPK (183 aa). Residues 19-24 and 136-139 each bind GTP; these read DHGKST and NKID.

Belongs to the TRAFAC class translation factor GTPase superfamily. Classic translation factor GTPase family. LepA subfamily.

The protein resides in the cell inner membrane. It catalyses the reaction GTP + H2O = GDP + phosphate + H(+). Required for accurate and efficient protein synthesis under certain stress conditions. May act as a fidelity factor of the translation reaction, by catalyzing a one-codon backward translocation of tRNAs on improperly translocated ribosomes. Back-translocation proceeds from a post-translocation (POST) complex to a pre-translocation (PRE) complex, thus giving elongation factor G a second chance to translocate the tRNAs correctly. Binds to ribosomes in a GTP-dependent manner. This Thermus thermophilus (strain ATCC BAA-163 / DSM 7039 / HB27) protein is Elongation factor 4.